The sequence spans 249 residues: MYSRYSAYNYSPHLGKTYVYDNKYYKNLGHVIKNAKRKHDALEREADERELDHLDKYLVAEDPFMGPGKNQKLTLFKEIRNVKPDTMKLIVNWNGKEFLRETWTRFMEDSFPIVNDQEVMDVFLVVNMRPTRPNRCFRFLAQHALRCDPEYVPHDVIRIVEPSYVGTNNEYRISLAKKGGGCPVMNLHAEYTTSFESFIDKVIWYNFYKPIVYVGTDSAEEEEILLEVSLVFKIKEFAPDAPLYTGPAY.

This sequence belongs to the polyhedrin family.

Major component of the virus occlusion bodies, which are large proteinaceous structures (polyhedra), that protect the virus from the outside environment for extended periods until they are ingested by insect larvae. The chain is Polyhedrin (PH) from Lepidoptera (butterflies and moths).